The primary structure comprises 556 residues: Glutamine--tRNA ligase (556 aa).

The 'HIGH' region signature appears at 33-43 (PEPNGYLHIGH). ATP is bound by residues 34-36 (EPN) and 40-46 (HIGHAKS). 2 residues coordinate L-glutamine: D66 and Y210. ATP-binding positions include T229, 259-260 (RL), and 267-269 (MSK). A 'KMSKS' region motif is present at residues 266–270 (VMSKR).

Belongs to the class-I aminoacyl-tRNA synthetase family. As to quaternary structure, monomer.

Its subcellular location is the cytoplasm. The catalysed reaction is tRNA(Gln) + L-glutamine + ATP = L-glutaminyl-tRNA(Gln) + AMP + diphosphate. In Clostridium kluyveri (strain ATCC 8527 / DSM 555 / NBRC 12016 / NCIMB 10680 / K1), this protein is Glutamine--tRNA ligase.